The sequence spans 402 residues: Dihydrolipoyllysine-residue acetyltransferase component of pyruvate dehydrogenase complex (402 aa).

The 76-residue stretch at 2–77 folds into the Lipoyl-binding domain; it reads ANEFKFTDVG…HIGQVMAVID (76 aa). At lysine 43 the chain carries N6-lipoyllysine. 2 disordered regions span residues 82 to 110 and 143 to 172; these read AAAP…APVT and PQPT…PSGE. Pro residues-rich tracts occupy residues 87–107 and 143–162; these read APQP…PTPA and PQPT…PTPA. Residue histidine 374 is part of the active site.

The protein belongs to the 2-oxoacid dehydrogenase family. As to quaternary structure, forms a 24-polypeptide structural core with octahedral symmetry. (R)-lipoate is required as a cofactor.

It carries out the reaction N(6)-[(R)-dihydrolipoyl]-L-lysyl-[protein] + acetyl-CoA = N(6)-[(R)-S(8)-acetyldihydrolipoyl]-L-lysyl-[protein] + CoA. Functionally, the pyruvate dehydrogenase complex catalyzes the overall conversion of pyruvate to acetyl-CoA and CO(2). It contains multiple copies of three enzymatic components: pyruvate dehydrogenase (E1), dihydrolipoamide acetyltransferase (E2) and lipoamide dehydrogenase (E3). The sequence is that of Dihydrolipoyllysine-residue acetyltransferase component of pyruvate dehydrogenase complex (pdhC) from Mycoplasma pneumoniae (strain ATCC 29342 / M129 / Subtype 1) (Mycoplasmoides pneumoniae).